Here is a 1132-residue protein sequence, read N- to C-terminus: Ubiquitin-associated protein 2 (1132 aa).

Positions 1–29 are disordered; it reads MMTSVSNDRCRGAREKPQMPTAHAAQSQK. A compositionally biased stretch (basic and acidic residues) spans 8–17; that stretch reads DRCRGAREKP. The 45-residue stretch at 48 to 92 folds into the UBA domain; it reads KNDSDFEAKVKQLMEVTGKNQDECIVALHDCNGDVNKAINILLEG. Disordered stretches follow at residues 95 to 202, 221 to 248, 331 to 351, 380 to 479, 602 to 679, 713 to 749, 875 to 919, 996 to 1033, 1040 to 1059, and 1087 to 1132; these read DTTS…YSES, GTDE…YGLK, NNQM…SPQS, LKPP…STVS, TSSA…VSTL, PLSQ…VEST, PYSG…LNPG, GGYG…GSVY, DKQG…SALG, and PHSQ…YWTN. Residues 109–130 are compositionally biased toward basic and acidic residues; that stretch reads FGRESSENKENREKRTEREASR. Residue arginine 166 is modified to Omega-N-methylarginine. Positions 168 to 182 are enriched in basic residues; sequence KRARGRGFGRGRGRG. Composition is skewed to polar residues over residues 233-244 and 331-340; these read HSMSQEPPSKSS and NNQMAPGTAN. The span at 341–351 shows a compositional bias: low complexity; that stretch reads STSASSYSPQS. The segment covering 392–404 has biased composition (polar residues); it reads SSAQQNDTASPPA. Serine 433 and serine 440 each carry phosphoserine. 2 stretches are compositionally biased toward low complexity: residues 436 to 448 and 602 to 618; these read LSQL…HQTQ and TSSA…SSSY. The segment covering 619-630 has biased composition (polar residues); that stretch reads DQSSVHTRIAYQ. Residue serine 631 is modified to Phosphoserine. The segment covering 631 to 644 has biased composition (low complexity); it reads SSASPPDSAPGSVA. The segment covering 652-662 has biased composition (polar residues); it reads SQHTVDTTSSV. Over residues 713 to 722 the composition is skewed to low complexity; the sequence is PLSQLSSSLS. Residues 723–742 are compositionally biased toward polar residues; that stretch reads GHQNSMTSAHATRSTSTPHT. Residues 897–914 are compositionally biased toward low complexity; it reads PAQAQQSQSQTHHTAQQP. Low complexity predominate over residues 1101 to 1115; the sequence is PSGSGQRSQPSSLQP. A compositionally biased stretch (polar residues) spans 1116–1132; it reads KSQASKPTYGSAPYWTN.

As to quaternary structure, may interact with ANXA2.

Its subcellular location is the nucleus. The protein localises to the chromosome. It is found in the cytoplasm. Its function is as follows. Recruits the ubiquitination machinery to RNA polymerase II for polyubiquitination, removal and degradation, when the transcription-coupled nucleotide excision repair (TC-NER) machinery fails to resolve DNA damage. May promote the degradation of ANXA2. This chain is Ubiquitin-associated protein 2, found in Mus musculus (Mouse).